Consider the following 188-residue polypeptide: Elongation factor P (188 aa).

An N6-(3,6-diaminohexanoyl)-5-hydroxylysine modification is found at K34.

The protein belongs to the elongation factor P family. Post-translationally, may be beta-lysylated on the epsilon-amino group of Lys-34 by the combined action of EpmA and EpmB, and then hydroxylated on the C5 position of the same residue by EpmC (if this protein is present). Lysylation is critical for the stimulatory effect of EF-P on peptide-bond formation. The lysylation moiety may extend toward the peptidyltransferase center and stabilize the terminal 3-CCA end of the tRNA. Hydroxylation of the C5 position on Lys-34 may allow additional potential stabilizing hydrogen-bond interactions with the P-tRNA.

It is found in the cytoplasm. Its pathway is protein biosynthesis; polypeptide chain elongation. Functionally, involved in peptide bond synthesis. Alleviates ribosome stalling that occurs when 3 or more consecutive Pro residues or the sequence PPG is present in a protein, possibly by augmenting the peptidyl transferase activity of the ribosome. Modification of Lys-34 is required for alleviation. The sequence is that of Elongation factor P from Actinobacillus succinogenes (strain ATCC 55618 / DSM 22257 / CCUG 43843 / 130Z).